Consider the following 388-residue polypeptide: 8-amino-7-oxononanoate synthase (388 aa).

Substrate is bound at residue Arg-23. 110 to 111 serves as a coordination point for pyridoxal 5'-phosphate; it reads GF. Residue His-135 participates in substrate binding. Positions 181, 209, and 235 each coordinate pyridoxal 5'-phosphate. Residue Lys-238 is modified to N6-(pyridoxal phosphate)lysine. Substrate is bound at residue Thr-352.

This sequence belongs to the class-II pyridoxal-phosphate-dependent aminotransferase family. BioF subfamily. As to quaternary structure, homodimer. The cofactor is pyridoxal 5'-phosphate.

The enzyme catalyses 6-carboxyhexanoyl-[ACP] + L-alanine + H(+) = (8S)-8-amino-7-oxononanoate + holo-[ACP] + CO2. The protein operates within cofactor biosynthesis; biotin biosynthesis. In terms of biological role, catalyzes the decarboxylative condensation of pimeloyl-[acyl-carrier protein] and L-alanine to produce 8-amino-7-oxononanoate (AON), [acyl-carrier protein], and carbon dioxide. The protein is 8-amino-7-oxononanoate synthase of Sodalis glossinidius (strain morsitans).